We begin with the raw amino-acid sequence, 503 residues long: tRNA-guanine(15) transglycosylase (503 aa).

The active-site Nucleophile is aspartate 86. A substrate-binding site is contributed by aspartate 121. The Zn(2+) site is built by cysteine 278, cysteine 280, and cysteine 283.

This sequence belongs to the archaeosine tRNA-ribosyltransferase family. It depends on Zn(2+) as a cofactor.

It carries out the reaction guanosine(15) in tRNA + 7-cyano-7-deazaguanine = 7-cyano-7-carbaguanosine(15) in tRNA + guanine. The protein operates within tRNA modification; archaeosine-tRNA biosynthesis. In terms of biological role, exchanges the guanine residue with 7-cyano-7-deazaguanine (preQ0) at position 15 in the dihydrouridine loop (D-loop) of archaeal tRNAs. This chain is tRNA-guanine(15) transglycosylase, found in Saccharolobus solfataricus (strain ATCC 35092 / DSM 1617 / JCM 11322 / P2) (Sulfolobus solfataricus).